A 51-amino-acid polypeptide reads, in one-letter code: Large ribosomal subunit protein eL39 (51 aa).

The protein belongs to the eukaryotic ribosomal protein eL39 family. Interacts with YIH1.

The chain is Large ribosomal subunit protein eL39 (RPL39) from Kluyveromyces marxianus (Yeast).